A 462-amino-acid polypeptide reads, in one-letter code: MSKLWGGRFTEEAEAWVEEFGASISFDQQLVNQDINGSIAHVTMLAKQGIVTKEEAEKIKIGLQYLLEEAKQNKLHFSVEAEDIHLNIEKMLIEKIGEVGGKLHTGRSRNDQVATDMHLYLKEKVERIIKATKQLQTVLVHQAENNIETIMPGYTHLQRAQPISFAHHILAYFWMLERDVNRYEDSLKRINISPLGAGALAGTTFPIDREYSAELLGLNGIYENSLDAVSDRDFILEFLSNSSILMMHLSRFCEELILWSSQEFQFIEMSDQYATGSSIMPQKKNPDMAELIRGKTGRVYGNLFSLLTVMKGLPLAYNKDLQEDKEGMFDTVKTVEGCLHIMAGMLETMTVNKEKMGQAVTKDFSNATEIADYLASKGLPFRQAHEIVGKLVLHCTQKGIYLVDVPLETYKEMSLLFEEDLYEVLSPYAAVKRRNSAGGTGFEQIKKALEKAKGLVGEFVGS.

This sequence belongs to the lyase 1 family. Argininosuccinate lyase subfamily.

Its subcellular location is the cytoplasm. The catalysed reaction is 2-(N(omega)-L-arginino)succinate = fumarate + L-arginine. It functions in the pathway amino-acid biosynthesis; L-arginine biosynthesis; L-arginine from L-ornithine and carbamoyl phosphate: step 3/3. This is Argininosuccinate lyase from Bacillus thuringiensis (strain Al Hakam).